A 170-amino-acid chain; its full sequence is MKEEKKLLLQEVEEKISASQGFILLRYLGFSAAYSREFRNSLSGVSAEFEVLKKRIFFKAIENSGFEIDSSDTGGHLGVVFAYDDAVSAAKQVLDFNKQHNDSLVFLAGRIDSANLSGKEVEAVAKLPSMKELRQQVVGLLAAPMSQVVGIMGSALSGVISCIDQKTQKN.

It belongs to the universal ribosomal protein uL10 family. Part of the ribosomal stalk of the 50S ribosomal subunit. The N-terminus interacts with L11 and the large rRNA to form the base of the stalk. The C-terminus forms an elongated spine to which L12 dimers bind in a sequential fashion forming a multimeric L10(L12)X complex.

Its function is as follows. Forms part of the ribosomal stalk, playing a central role in the interaction of the ribosome with GTP-bound translation factors. This chain is Large ribosomal subunit protein uL10, found in Chlamydia caviae (strain ATCC VR-813 / DSM 19441 / 03DC25 / GPIC) (Chlamydophila caviae).